Consider the following 263-residue polypeptide: uncharacterized protein (263 aa).

The N-terminal stretch at 1–22 (MGYLKRLVLYIVIMVMSVFIIG) is a signal peptide. C23 carries N-palmitoyl cysteine lipidation. C23 is lipidated: S-diacylglycerol cysteine.

Belongs to the staphylococcal tandem lipoprotein family.

It localises to the cell membrane. This is an uncharacterized protein from Staphylococcus aureus (strain N315).